A 729-amino-acid chain; its full sequence is Heterogeneous nuclear ribonucleoprotein M (729 aa).

A compositionally biased stretch (low complexity) spans 1–13; the sequence is MAAGVEAAAEVAA. Residues 1-65 form a disordered region; it reads MAAGVEAAAE…GGNRFEPYSN (65 aa). Position 2 is an N-acetylalanine (Ala2). A Glycyl lysine isopeptide (Lys-Gly) (interchain with G-Cter in SUMO2) cross-link involves residue Lys17. The residue at position 29 (Ser29) is a Phosphoserine. Glycyl lysine isopeptide (Lys-Gly) (interchain with G-Cter in SUMO2) cross-links involve residues Lys37, Lys68, and Lys82. Basic and acidic residues predominate over residues 37-49; the sequence is KGEERPTQNEKRK. RRM domains lie at 70-148 and 203-280; these read YRAF…EDPD and STVF…MDER. The residue at position 85 (Ser85) is a Phosphoserine. Residues Lys87 and Lys126 each participate in a glycyl lysine isopeptide (Lys-Gly) (interchain with G-Cter in SUMO2) cross-link. Residue Lys133 is modified to N6-acetyllysine; alternate. Residue Lys133 forms a Glycyl lysine isopeptide (Lys-Gly) (interchain with G-Cter in SUMO2); alternate linkage. Residues Lys142 and Lys144 each participate in a glycyl lysine isopeptide (Lys-Gly) (interchain with G-Cter in SUMO2) cross-link. Phosphoserine is present on Ser203. Lys220 is covalently cross-linked (Glycyl lysine isopeptide (Lys-Gly) (interchain with G-Cter in SUMO2)). Lys276 is subject to N6-acetyllysine; alternate. A Glycyl lysine isopeptide (Lys-Gly) (interchain with G-Cter in SUMO2); alternate cross-link involves residue Lys276. Glycyl lysine isopeptide (Lys-Gly) (interchain with G-Cter in SUMO2) cross-links involve residues Lys284 and Lys344. 2 positions are modified to phosphoserine: Ser364 and Ser376. Glycyl lysine isopeptide (Lys-Gly) (interchain with G-Cter in SUMO2) cross-links involve residues Lys380 and Lys387. Ser396 carries the post-translational modification Phosphoserine. A run of 4 repeats spans residues 399–404, 406–411, 414–419, and 425–430. A 27 X 6 AA repeats of [GEVSTPAN]-[ILMV]-[DE]-[RH]-[MLVI]-[GAV] region spans residues 399 to 607; that stretch reads GIERMGPGID…ALGAGIERMG (209 aa). Ser431 is subject to Phosphoserine. 3 repeat units span residues 432 to 437, 439 to 444, and 445 to 450. Position 451 is a phosphoserine (Ser451). A run of 4 repeats spans residues 452–457, 460–465, 467–472, and 474–479. Ser467 carries the phosphoserine modification. The residue at position 480 (Ser480) is a Phosphoserine. 16 consecutive repeat copies span residues 481-486, 492-497, 499-504, 506-511, 513-518, 520-525, 527-532, 539-544, 546-551, 553-558, 561-566, 567-571, 574-579, 580-584, 587-592, and 602-607. Omega-N-methylarginine is present on Arg495. At Ser527 the chain carries Phosphoserine. Ser574 carries the post-translational modification Phosphoserine. Ser587 is subject to Phosphoserine. A phosphoserine mark is found at Ser617, Ser632, and Ser636. A Glycyl lysine isopeptide (Lys-Gly) (interchain with G-Cter in SUMO2) cross-link involves residue Lys650. In terms of domain architecture, RRM 3 spans 652-728; that stretch reads CQIFVRNLPF…REIDVRIDRN (77 aa). At Thr664 the chain carries Phosphothreonine. Residue Lys666 forms a Glycyl lysine isopeptide (Lys-Gly) (interchain with G-Cter in SUMO2) linkage. Lys671 carries the N6-acetyllysine modification. Residues Lys684 and Lys691 each participate in a glycyl lysine isopeptide (Lys-Gly) (interchain with G-Cter in SUMO2) cross-link. Residue Lys697 is modified to N6-acetyllysine; alternate. Lys697 participates in a covalent cross-link: Glycyl lysine isopeptide (Lys-Gly) (interchain with G-Cter in SUMO2); alternate. Lys697 participates in a covalent cross-link: Glycyl lysine isopeptide (Lys-Gly) (interchain with G-Cter in SUMO1); alternate. Ser700 carries the post-translational modification Phosphoserine. Lys715 is covalently cross-linked (Glycyl lysine isopeptide (Lys-Gly) (interchain with G-Cter in SUMO2)).

Identified in the spliceosome C complex. Interacts with PPIA/CYPA. Sumoylated.

It localises to the nucleus. Pre-mRNA binding protein in vivo, binds avidly to poly(G) and poly(U) RNA homopolymers in vitro. Involved in splicing. Acts as a receptor for carcinoembryonic antigen in Kupffer cells, may initiate a series of signaling events leading to tyrosine phosphorylation of proteins and induction of IL-1 alpha, IL-6, IL-10 and tumor necrosis factor alpha cytokines. In Mus musculus (Mouse), this protein is Heterogeneous nuclear ribonucleoprotein M (Hnrnpm).